A 237-amino-acid chain; its full sequence is Ribosomal RNA small subunit methyltransferase G (237 aa).

S-adenosyl-L-methionine-binding positions include Gly78, Phe83, 129–130 (AE), and Arg148. A disordered region spans residues 218-237 (KKETPNKYPRKAGMPNKRPL).

Belongs to the methyltransferase superfamily. RNA methyltransferase RsmG family.

The protein resides in the cytoplasm. Specifically methylates the N7 position of a guanine in 16S rRNA. This Streptococcus sanguinis (strain SK36) protein is Ribosomal RNA small subunit methyltransferase G.